Here is a 180-residue protein sequence, read N- to C-terminus: Progesterone receptor (180 aa).

An NR C4-type zinc finger spans residues K1–C11. Positions K1 to M16 form a DNA-binding region, nuclear receptor. S60 carries the phosphoserine modification. One can recognise an NR LBD domain in the interval Q63–S180. The AF2; mediates transcriptional activation stretch occupies residues L71–S180. Position 150 (R150) interacts with progesterone.

It belongs to the nuclear hormone receptor family. NR3 subfamily. As to quaternary structure, interacts with SMARD1 and UNC45A. Interacts with CUEDC2; the interaction promotes ubiquitination, decreases sumoylation, and represses transcriptional activity. Interacts with PIAS3; the interaction promotes sumoylation of PR in a hormone-dependent manner, inhibits DNA-binding, and alters nuclear export. Interacts with SP1; the interaction requires ligand-induced phosphorylation by ERK1/2-MAPK. Interacts with PRMT2. Interacts with NCOA2 and NCOA1. Interacts with KLF9. Interacts with GTF2B. Post-translationally, phosphorylated on multiple serine sites. Several of these sites are hormone-dependent. In terms of processing, sumoylation is hormone-dependent and represses transcriptional activity. Sumoylation on all three sites is enhanced by PIAS3. Desumoylated by SENP1. Sumoylation is repressed by ubiquitination and modulated by phosphorylation. Ubiquitination is hormone-dependent and represses sumoylation. Post-translationally, palmitoylated by ZDHHC7 and ZDHHC21. Palmitoylation is required for plasma membrane targeting and for rapid intracellular signaling via ERK and AKT kinases and cAMP generation.

The protein localises to the nucleus. The protein resides in the cytoplasm. Its function is as follows. The steroid hormones and their receptors are involved in the regulation of eukaryotic gene expression and affect cellular proliferation and differentiation in target tissues. Transcriptional activator of several progesteron-dependent promoters in a variety of cell types. Involved in activation of SRC-dependent MAPK signaling on hormone stimulation. This chain is Progesterone receptor (PGR), found in Notamacropus eugenii (Tammar wallaby).